A 142-amino-acid polypeptide reads, in one-letter code: Large ribosomal subunit protein uL11 (142 aa).

It belongs to the universal ribosomal protein uL11 family. As to quaternary structure, part of the ribosomal stalk of the 50S ribosomal subunit. Interacts with L10 and the large rRNA to form the base of the stalk. L10 forms an elongated spine to which L12 dimers bind in a sequential fashion forming a multimeric L10(L12)X complex. In terms of processing, one or more lysine residues are methylated.

In terms of biological role, forms part of the ribosomal stalk which helps the ribosome interact with GTP-bound translation factors. This chain is Large ribosomal subunit protein uL11, found in Rhizobium meliloti (strain 1021) (Ensifer meliloti).